The sequence spans 385 residues: MYVRHFGLRDFRSWDHVDLELNPGRTVFFGPNGNGKTNLIEALWYSTTLSSHRVGTDIPLIRAGTIRAIVSTIVVNEGRECAIDLEIAAGRANRARLNRSLVRGMREVVGVLRAVLFAPEDLALVCGDPANRRRYLDDLATVRQPVIAAVRADYDKVLRQRTALLKSLAAARYRSDQGVLDTLDVWDTRLAEHGAELMAARIDLVNQLAPEVEKAYQLLAPGSRTASISYRASLDIGGIAGVGSSDRALLQADLLAGLSTRRNVELERGICLVGPHRDELELRLGDQPAKGFASHGESWSLAIALRLAAYELLRADGNEPVLLLDDVFAELDAARCRALATVAESAEQVLVTSAAQEDIPVGWDAKWVTVDLRDSDSGRVSVVYP.

30–37 (GPNGNGKT) lines the ATP pocket.

Belongs to the RecF family.

The protein localises to the cytoplasm. In terms of biological role, the RecF protein is involved in DNA metabolism; it is required for DNA replication and normal SOS inducibility. RecF binds preferentially to single-stranded, linear DNA. It also seems to bind ATP. This is DNA replication and repair protein RecF from Mycobacterium leprae (strain Br4923).